The sequence spans 152 residues: Dynein light chain Tctex-type protein 2B (152 aa).

The protein belongs to the dynein light chain Tctex-type family. In terms of assembly, light chain of the cytoplasmic dynein complex 2, a multisubunit complex composed at least of eleven different proteins. The cytoplasmic dynein 2 complex consists of two catalytic heavy chains (HCs) and a number of non-catalytic subunits presented by intermediate chains (ICs), light intermediate chains (LICs) and light chains (LCs). Among them, a heavy chain (DYNC2H1), two intermediate chains (DYNC2I2 and DYNC2I1), a light intermediate chain (DYNC2LI1), and a light chain (DYNLT2B) are unique to the dynein-2 complex, but a subset of the light chains are also shared by dynein-1 and dynein-2 complexes. The dimer DYNLT2B-DYNLT1/DYNLT3 interacts with DYNC2I1; this interaction is crucial for retrograde trafficking of ciliary proteins.

The protein localises to the dynein axonemal particle. In terms of biological role, acts as one of several non-catalytic accessory components of the cytoplasmic dynein 2 complex (dynein-2 complex), a motor protein complex that drives the movement of cargos along microtubules within cilia and flagella in concert with the intraflagellar transport (IFT) system. Required for proper retrograde ciliary transport. The chain is Dynein light chain Tctex-type protein 2B (DYNLT2B) from Bos taurus (Bovine).